The following is a 140-amino-acid chain: Iron sulfur cluster assembly protein 1 (140 aa).

The protein belongs to the NifU family. As to quaternary structure, component of the core Fe-S cluster (ISC) assembly machinery. [2Fe-2S] cluster serves as cofactor.

It is found in the mitosome matrix. The protein operates within cofactor biosynthesis; iron-sulfur cluster biosynthesis. Its function is as follows. Scaffold protein for the de novo synthesis of iron-sulfur (Fe-S) clusters within mitosomes, which is required for maturation of both [2Fe-2S] and [4Fe-4S] proteins. First, a [2Fe-2S] cluster is transiently assembled on the scaffold protein ISU1. In a second step, the cluster is released from ISU1, transferred to a glutaredoxin, followed by the formation of [2Fe-2S] proteins, the synthesis of [4Fe-4S] clusters and their target-specific insertion into the recipient apoproteins. Cluster assembly on ISU1 depends on the function of the cysteine desulfurase complex NFS1-ISD11, which serves as the sulfur donor for cluster synthesis, the iron-binding protein frataxin as the putative iron donor, and the electron transfer chain comprised of ferredoxin reductase and ferredoxin, which receive their electrons from NADH. The protein is Iron sulfur cluster assembly protein 1 (ISU1) of Encephalitozoon cuniculi (strain GB-M1) (Microsporidian parasite).